A 150-amino-acid chain; its full sequence is Protein-export protein SecB (150 aa).

It belongs to the SecB family. In terms of assembly, homotetramer, a dimer of dimers. One homotetramer interacts with 1 SecA dimer.

Its subcellular location is the cytoplasm. Functionally, one of the proteins required for the normal export of preproteins out of the cell cytoplasm. It is a molecular chaperone that binds to a subset of precursor proteins, maintaining them in a translocation-competent state. It also specifically binds to its receptor SecA. This chain is Protein-export protein SecB, found in Acidovorax ebreus (strain TPSY) (Diaphorobacter sp. (strain TPSY)).